We begin with the raw amino-acid sequence, 1149 residues long: Golgi apparatus protein 1 homolog (1149 aa).

The N-terminal stretch at 1 to 19 is a signal peptide; the sequence is MWRFPLILASVCWLTTAQQ. The Extracellular portion of the chain corresponds to 20–1115; sequence QNVANDPDKK…NLVMEHPERN (1096 aa). 16 Cys-rich GLG1 repeats span residues 24 to 69, 71 to 135, 139 to 207, 216 to 276, 277 to 344, 349 to 411, 415 to 475, 477 to 549, 551 to 610, 613 to 676, 677 to 736, 743 to 803, 809 to 867, 868 to 938, 945 to 1009, and 1010 to 1070; these read NDPD…FSET, TLSE…KNVT, KCHA…VKNA, ILGD…NDKF, MDPE…NQPE, QPSK…ESRN, KLGA…NVDS, DMVP…YDEQ, PLSV…ETDN, RKHP…DAKE, MNNK…FEHK, DLTD…IECL, HLGP…IVRL, LQRE…RQSI, DFSP…NKGL, and IRDK…DKQE. An N-linked (GlcNAc...) asparagine glycan is attached at Asn-133. Asn-411 is a glycosylation site (N-linked (GlcNAc...) asparagine). The helical transmembrane segment at 1116–1136 threads the bilayer; that stretch reads SILGYLAGFIVFILLIGCCCG. Over 1137–1149 the chain is Cytoplasmic; the sequence is RVSKKQYIEMKNR.

The protein resides in the membrane. The sequence is that of Golgi apparatus protein 1 homolog from Caenorhabditis elegans.